A 486-amino-acid chain; its full sequence is 3-sulfolactaldehyde dehydrogenase (486 aa).

NADP(+) is bound by residues 157 to 158 (WN), 181 to 184 (RPAS), and 234 to 235 (GS). Glu-256 acts as the Proton acceptor in catalysis. Leu-257 is a binding site for NADP(+). Catalysis depends on Cys-290, which acts as the Nucleophile. Residue Glu-387 coordinates NADP(+).

It belongs to the aldehyde dehydrogenase family.

The catalysed reaction is (2S)-3-sulfolactaldehyde + NADP(+) + H2O = (2S)-3-sulfolactate + NADPH + 2 H(+). The enzyme catalyses (2S)-3-sulfolactaldehyde + NAD(+) + H2O = (2S)-3-sulfolactate + NADH + 2 H(+). Functionally, catalyzes the oxidation of (2S)-3-sulfolactaldehyde to (2S)-3-sulfolactate, using both NAD(+) and NADP(+) as electron acceptors. Is involved in a degradation pathway of sulfoquinovose (SQ) that allows P.putida SQ1 to use SQ as the sole carbon and energy source for growth. This is 3-sulfolactaldehyde dehydrogenase from Pseudomonas putida (Arthrobacter siderocapsulatus).